Reading from the N-terminus, the 119-residue chain is UPF0342 protein GTNG_0551 (119 aa).

It belongs to the UPF0342 family.

This chain is UPF0342 protein GTNG_0551, found in Geobacillus thermodenitrificans (strain NG80-2).